Reading from the N-terminus, the 547-residue chain is Malolactic enzyme (547 aa).

The active-site Proton donor is the Tyr92. The active-site Proton acceptor is Lys165. A substrate-binding site is contributed by Lys165. 3 residues coordinate Mn(2+): Glu236, Asp237, and Asp260. Residues 293-296 (AGTA), Asn405, and Asn450 each bind NAD(+). A substrate-binding site is contributed by Asn450.

It belongs to the malic enzymes family. Homodimer. Mn(2+) is required as a cofactor. The cofactor is NAD(+).

It carries out the reaction (S)-malate + H(+) = (S)-lactate + CO2. Functionally, involved in the malolactic fermentation (MLF) of wine, which results in a natural decrease in acidity and favorable changes in wine flavors. Catalyzes the decarboxylation of L-malate to L-lactate. The polypeptide is Malolactic enzyme (Lactiplantibacillus plantarum (strain ATCC BAA-793 / NCIMB 8826 / WCFS1) (Lactobacillus plantarum)).